Reading from the N-terminus, the 110-residue chain is Large ribosomal subunit protein uL22 (110 aa).

Belongs to the universal ribosomal protein uL22 family. In terms of assembly, part of the 50S ribosomal subunit.

Functionally, this protein binds specifically to 23S rRNA; its binding is stimulated by other ribosomal proteins, e.g. L4, L17, and L20. It is important during the early stages of 50S assembly. It makes multiple contacts with different domains of the 23S rRNA in the assembled 50S subunit and ribosome. The globular domain of the protein is located near the polypeptide exit tunnel on the outside of the subunit, while an extended beta-hairpin is found that lines the wall of the exit tunnel in the center of the 70S ribosome. The sequence is that of Large ribosomal subunit protein uL22 from Nitrosomonas eutropha (strain DSM 101675 / C91 / Nm57).